Consider the following 1391-residue polypeptide: DNA-directed RNA polymerase subunit beta' (1391 aa).

Residues cysteine 72, cysteine 74, cysteine 87, and cysteine 90 each contribute to the Zn(2+) site. Residues aspartate 462, aspartate 464, and aspartate 466 each coordinate Mg(2+). Zn(2+) contacts are provided by cysteine 816, cysteine 890, cysteine 897, and cysteine 900.

Belongs to the RNA polymerase beta' chain family. As to quaternary structure, the RNAP catalytic core consists of 2 alpha, 1 beta, 1 beta' and 1 omega subunit. When a sigma factor is associated with the core the holoenzyme is formed, which can initiate transcription. Mg(2+) is required as a cofactor. It depends on Zn(2+) as a cofactor.

The enzyme catalyses RNA(n) + a ribonucleoside 5'-triphosphate = RNA(n+1) + diphosphate. In terms of biological role, DNA-dependent RNA polymerase catalyzes the transcription of DNA into RNA using the four ribonucleoside triphosphates as substrates. The sequence is that of DNA-directed RNA polymerase subunit beta' from Neisseria meningitidis serogroup C (strain 053442).